Consider the following 350-residue polypeptide: Arginine N-succinyltransferase (350 aa).

Leu-125 lines the succinyl-CoA pocket. His-229 functions as the Proton donor in the catalytic mechanism.

Belongs to the arginine N-succinyltransferase family.

It carries out the reaction succinyl-CoA + L-arginine = N(2)-succinyl-L-arginine + CoA + H(+). It functions in the pathway amino-acid degradation; L-arginine degradation via AST pathway; L-glutamate and succinate from L-arginine: step 1/5. In terms of biological role, catalyzes the transfer of succinyl-CoA to arginine to produce N(2)-succinylarginine. The chain is Arginine N-succinyltransferase from Yersinia pseudotuberculosis serotype O:3 (strain YPIII).